A 230-amino-acid chain; its full sequence is Cytidylate kinase (230 aa).

Residue 12 to 20 participates in ATP binding; that stretch reads GPSGAGKGT.

This sequence belongs to the cytidylate kinase family. Type 1 subfamily.

Its subcellular location is the cytoplasm. It carries out the reaction CMP + ATP = CDP + ADP. The enzyme catalyses dCMP + ATP = dCDP + ADP. The sequence is that of Cytidylate kinase from Shewanella putrefaciens (strain CN-32 / ATCC BAA-453).